The sequence spans 280 residues: Nitrogenase iron-iron protein alpha chain (280 aa).

3 residues coordinate [8Fe-7S] cluster: Cys5, Cys31, and Cys94. [8Fe-9S-C-homocitryl] cluster is bound at residue Cys213.

The protein belongs to the NifD/NifK/NifE/NifN family. As to quaternary structure, hexamer of two alpha, two beta, and two delta chains. It depends on [8Fe-7S] cluster as a cofactor. The cofactor is [8Fe-9S-C-homocitryl] cluster.

The catalysed reaction is N2 + 8 reduced [2Fe-2S]-[ferredoxin] + 16 ATP + 16 H2O = H2 + 8 oxidized [2Fe-2S]-[ferredoxin] + 2 NH4(+) + 16 ADP + 16 phosphate + 6 H(+). In terms of biological role, this iron-iron protein is part of the nitrogenase complex that catalyzes the key enzymatic reactions in nitrogen fixation. Other nitrogenase complexes utilize a molybdenum-iron protein or a vanadium-iron protein. In Heliomicrobium gestii (Heliobacterium gestii), this protein is Nitrogenase iron-iron protein alpha chain (anfD).